The primary structure comprises 193 residues: Ion-translocating oxidoreductase complex subunit A (193 aa).

6 consecutive transmembrane segments (helical) span residues 5–25 (LLLFVGTVLVNNFVLVKFLGL), 39–59 (MGMGLATTFVMTLASICAWLI), 63–83 (ILIPLNLIYLRTLAFILVIAV), 102–122 (LLGIFLPLITTNCAVLGVALL), 134–154 (ALYGFSAAVGFSLVMVLFAAI), and 171–191 (AIALITAGLMSLAFMGFSGLV).

This sequence belongs to the NqrDE/RnfAE family. In terms of assembly, the complex is composed of six subunits: RsxA, RsxB, RsxC, RsxD, RsxE and RsxG.

It localises to the cell inner membrane. Functionally, part of a membrane-bound complex that couples electron transfer with translocation of ions across the membrane. Required to maintain the reduced state of SoxR. This Escherichia fergusonii (strain ATCC 35469 / DSM 13698 / CCUG 18766 / IAM 14443 / JCM 21226 / LMG 7866 / NBRC 102419 / NCTC 12128 / CDC 0568-73) protein is Ion-translocating oxidoreductase complex subunit A.